Here is a 514-residue protein sequence, read N- to C-terminus: Protein spinster homolog 3 (514 aa).

Positions 1 to 22 (MSTECLKPQTGGPQSQSLSQGG) are disordered. Residues 9–21 (QTGGPQSQSLSQG) are compositionally biased toward low complexity. Helical transmembrane passes span 54-74 (VLCY…GVLL), 88-108 (GLLQ…FGYL), 116-136 (AILS…SFIS), 149-169 (FVGT…GDLF), 176-196 (CALA…YVLG), 212-232 (LMPC…PDVP), 264-284 (FVFS…LGFW), 313-333 (LIFG…GAEA), 347-367 (LICA…LILA), 376-396 (VFLA…ADIL), 415-435 (VAHV…SSVL), and 453-473 (SFLC…LTAL). The disordered stretch occupies residues 482–514 (ARQPGKGTLDSKDIASRNTESQGLLSGTSTPTE). Over residues 497–514 (SRNTESQGLLSGTSTPTE) the composition is skewed to polar residues.

The protein belongs to the major facilitator superfamily. Spinster (TC 2.A.1.49) family.

The protein localises to the membrane. In terms of biological role, sphingolipid transporter. The polypeptide is Protein spinster homolog 3 (Spns3) (Mus musculus (Mouse)).